The sequence spans 481 residues: Thiol protease (481 aa).

Positions 169 to 481 (DLREQALSST…ENFWYIAYMY (313 aa)) constitute a Calpain catalytic domain. Active-site residues include Cys-229, His-406, and Asn-426.

This sequence belongs to the peptidase C2 family.

Its activity is regulated as follows. Inactive below 20 degrees Celsius and pH 6.0. Inhibited by divalent cations. In terms of biological role, thiol protease. Probably an important virulence factor. This Porphyromonas gingivalis (strain ATCC BAA-308 / W83) protein is Thiol protease (tpr).